The following is a 323-amino-acid chain: Putative ABC transporter substrate-binding lipoprotein YhfQ (323 aa).

An N-terminal signal peptide occupies residues 1–19 (MKKTLIILTVLLLSVLTAA). Cys-20 is lipidated: N-palmitoyl cysteine. Residue Cys-20 is the site of S-diacylglycerol cysteine attachment. In terms of domain architecture, Fe/B12 periplasmic-binding spans 51–322 (RVVVLELGFI…ELQKEMPAAK (272 aa)).

This sequence belongs to the bacterial solute-binding protein 8 family. As to quaternary structure, interacts with FloT.

The protein resides in the cell membrane. It is found in the membrane raft. This is Putative ABC transporter substrate-binding lipoprotein YhfQ (yhfQ) from Bacillus subtilis (strain 168).